The primary structure comprises 265 residues: Tryptophan synthase alpha chain (265 aa).

Residues E49 and D60 each act as proton acceptor in the active site.

This sequence belongs to the TrpA family. Tetramer of two alpha and two beta chains.

It catalyses the reaction (1S,2R)-1-C-(indol-3-yl)glycerol 3-phosphate + L-serine = D-glyceraldehyde 3-phosphate + L-tryptophan + H2O. Its pathway is amino-acid biosynthesis; L-tryptophan biosynthesis; L-tryptophan from chorismate: step 5/5. In terms of biological role, the alpha subunit is responsible for the aldol cleavage of indoleglycerol phosphate to indole and glyceraldehyde 3-phosphate. This is Tryptophan synthase alpha chain from Paracoccus denitrificans (strain Pd 1222).